We begin with the raw amino-acid sequence, 419 residues long: Peroxisomal membrane protein PMP47B (419 aa).

3 Solcar repeats span residues 6–120, 142–230, and 239–369; these read YDDL…TGKT, LSVW…LKSF, and VTPV…LLIL. A helical transmembrane segment spans residues 12-32; the sequence is AFAGAGGGLLSMTLTYPLVTL. Over residues 44-53 the composition is skewed to basic and acidic residues; it reads KNEEEEKENS. The tract at residues 44–69 is disordered; the sequence is KNEEEEKENSNEDGSLSPKSSNTSNI. Over residues 56-69 the composition is skewed to polar residues; it reads DGSLSPKSSNTSNI. A run of 3 helical transmembrane segments spans residues 98 to 118, 204 to 224, and 245 to 265; these read SALFGIAVTNFVYYYFYELTG, FTGIVPALFLVLNPIIQYTIF, and LLLGAFGKLIATIITYPYITL. The tract at residues 274 to 305 is disordered; sequence MTENNEDSEKERTDSVQSLPEDGSDEDNSKEN. 2 helical membrane-spanning segments follow: residues 310 to 330 and 349 to 369; these read TINKIISKLPSPIVSMFIIGY and LLQSILNAAFLFYFKEELLIL.

This sequence belongs to the mitochondrial carrier (TC 2.A.29) family.

It localises to the peroxisome membrane. Its function is as follows. May have transport activity. This is Peroxisomal membrane protein PMP47B (PMP47B) from Candida boidinii (Yeast).